The chain runs to 157 residues: Large ribosomal subunit protein uL13m (157 aa).

The transit peptide at 1–29 (MSTLNGQTALAYAKVWHHVSAKNVPLGRL) directs the protein to the mitochondrion.

Belongs to the universal ribosomal protein uL13 family. In terms of assembly, component of the mitochondrial large ribosomal subunit (mt-LSU). Mature yeast 74S mitochondrial ribosomes consist of a small (37S) and a large (54S) subunit. The 37S small subunit contains a 15S ribosomal RNA (15S mt-rRNA) and at least 32 different proteins. The 54S large subunit contains a 21S rRNA (21S mt-rRNA) and at least 45 different proteins.

Its subcellular location is the mitochondrion. Its function is as follows. Component of the mitochondrial ribosome (mitoribosome), a dedicated translation machinery responsible for the synthesis of mitochondrial genome-encoded proteins, including at least some of the essential transmembrane subunits of the mitochondrial respiratory chain. The mitoribosomes are attached to the mitochondrial inner membrane and translation products are cotranslationally integrated into the membrane. This chain is Large ribosomal subunit protein uL13m, found in Schizosaccharomyces pombe (strain 972 / ATCC 24843) (Fission yeast).